Reading from the N-terminus, the 489-residue chain is Potassium voltage-gated channel subfamily A member 7 (489 aa).

The chain crosses the membrane as a helical span at residues 176–196 (VLAVVSVLVILVSIVVFCLET). Residue asparagine 224 is glycosylated (N-linked (GlcNAc...) asparagine). A helical membrane pass occupies residues 242 to 262 (FFVVETLCICWFSFELLVRLV). Cysteine 264 carries the S-palmitoyl cysteine lipid modification. A helical membrane pass occupies residues 274 to 294 (VMNLIDFVAILPYFVALGTEL). The helical; Voltage-sensor transmembrane segment at 309–328 (ILRVIRLVRVFRIFKLSRHS) threads the bilayer. Residues 345–365 (LGLLIFFLFIGVVLFSSAVYF) traverse the membrane as a helical segment. The short motif at 391–396 (TVGYGD) is the Selectivity filter element. A helical membrane pass occupies residues 406-426 (IVGSLCAIAGVLTISLPVPVI).

The protein belongs to the potassium channel family. A (Shaker) (TC 1.A.1.2) subfamily. Kv1.7/KCNA7 sub-subfamily. As to quaternary structure, heterotetramer of potassium channel proteins. As to expression, detected in heart, skeletal muscle, brain, and pancreatic islet cells.

The protein resides in the membrane. It carries out the reaction K(+)(in) = K(+)(out). Its function is as follows. Mediates the voltage-dependent potassium ion permeability of excitable membranes. Assuming opened or closed conformations in response to the voltage difference across the membrane, the protein forms a potassium-selective channel through which potassium ions may pass in accordance with their electrochemical gradient. Channels formed by isoform 1 inactivate faster than channels formed by isoform 2. This Mus musculus (Mouse) protein is Potassium voltage-gated channel subfamily A member 7 (Kcna7).